The primary structure comprises 192 residues: ATP-dependent Clp protease proteolytic subunit 1 (192 aa).

The active-site Nucleophile is serine 92. Histidine 117 is an active-site residue.

This sequence belongs to the peptidase S14 family. In terms of assembly, fourteen ClpP subunits assemble into 2 heptameric rings which stack back to back to give a disk-like structure with a central cavity, resembling the structure of eukaryotic proteasomes.

It is found in the cytoplasm. The enzyme catalyses Hydrolysis of proteins to small peptides in the presence of ATP and magnesium. alpha-casein is the usual test substrate. In the absence of ATP, only oligopeptides shorter than five residues are hydrolyzed (such as succinyl-Leu-Tyr-|-NHMec, and Leu-Tyr-Leu-|-Tyr-Trp, in which cleavage of the -Tyr-|-Leu- and -Tyr-|-Trp bonds also occurs).. Functionally, cleaves peptides in various proteins in a process that requires ATP hydrolysis. Has a chymotrypsin-like activity. Plays a major role in the degradation of misfolded proteins. This chain is ATP-dependent Clp protease proteolytic subunit 1, found in Chlamydia muridarum (strain MoPn / Nigg).